The primary structure comprises 149 residues: Ribonuclease HI (149 aa).

In terms of domain architecture, RNase H type-1 spans 1-142 (MTPKVTIYTD…ADALANEGLR (142 aa)). 4 residues coordinate Mg(2+): aspartate 10, glutamate 48, aspartate 70, and aspartate 134.

This sequence belongs to the RNase H family. As to quaternary structure, monomer. It depends on Mg(2+) as a cofactor.

It localises to the cytoplasm. It catalyses the reaction Endonucleolytic cleavage to 5'-phosphomonoester.. In terms of biological role, endonuclease that specifically degrades the RNA of RNA-DNA hybrids. The chain is Ribonuclease HI from Caulobacter vibrioides (strain ATCC 19089 / CIP 103742 / CB 15) (Caulobacter crescentus).